An 86-amino-acid chain; its full sequence is Bacteriocin thailandicin (86 aa).

Residues L23 to W86 constitute a cross-link (cyclopeptide (Leu-Trp)).

Its subcellular location is the secreted. Functionally, cyclopeptide antibiotic with bacteriolytic activity against the Gram-positive bacteria S.aureus and S.thermophilus, and lower activity against the Gram-negative bacteria E.coli and P.aeruginosa. This Enterococcus thailandicus protein is Bacteriocin thailandicin.